The sequence spans 262 residues: Thrombin-like enzyme calobin-1 (262 aa).

An N-terminal signal peptide occupies residues 1-18 (MVLISVLANLLILQLSYA). A propeptide spanning residues 19–24 (QKSSEL) is cleaved from the precursor. The Peptidase S1 domain maps to 25–253 (VIGGDECNIN…HLDWIQSIIA (229 aa)). Disulfide bonds link C31–C165, C52–C68, C100–C260, C144–C214, C176–C193, and C204–C229. H67 acts as the Charge relay system in catalysis. Residue N105 is glycosylated (N-linked (GlcNAc...) asparagine). D112 functions as the Charge relay system in the catalytic mechanism. The Charge relay system role is filled by S208.

Belongs to the peptidase S1 family. Snake venom subfamily. In terms of assembly, monomer. In terms of processing, N-glycosylated. In terms of tissue distribution, expressed by the venom gland.

It localises to the secreted. Strongly inhibited by PMSF, and moderately by benzamidine and soybean trypsin inhibitor. In terms of biological role, thrombin-like snake venom serine protease. Has a coagulant activity. Acts on alpha-chains of fibrinogen (FGA) generating fibrinopeptide A. The protein is Thrombin-like enzyme calobin-1 of Gloydius ussuriensis (Ussuri mamushi).